We begin with the raw amino-acid sequence, 163 residues long: Phosphopantetheine adenylyltransferase (163 aa).

Residue Thr-10 coordinates substrate. ATP-binding positions include 10–11 (TF) and His-18. Substrate is bound by residues Lys-42, Leu-74, and Arg-88. ATP-binding positions include 89–91 (GLR), Glu-99, and 124–130 (NSFISST).

It belongs to the bacterial CoaD family. As to quaternary structure, homohexamer. Mg(2+) is required as a cofactor.

The protein localises to the cytoplasm. It carries out the reaction (R)-4'-phosphopantetheine + ATP + H(+) = 3'-dephospho-CoA + diphosphate. Its pathway is cofactor biosynthesis; coenzyme A biosynthesis; CoA from (R)-pantothenate: step 4/5. Functionally, reversibly transfers an adenylyl group from ATP to 4'-phosphopantetheine, yielding dephospho-CoA (dPCoA) and pyrophosphate. In Shewanella baltica (strain OS195), this protein is Phosphopantetheine adenylyltransferase.